The sequence spans 563 residues: Dihydroxy-acid dehydratase (563 aa).

Residue D78 participates in Mg(2+) binding. Residue C119 participates in [2Fe-2S] cluster binding. Residues D120 and K121 each coordinate Mg(2+). K121 is subject to N6-carboxylysine. Residue C191 coordinates [2Fe-2S] cluster. E442 contributes to the Mg(2+) binding site. S468 serves as the catalytic Proton acceptor.

The protein belongs to the IlvD/Edd family. In terms of assembly, homodimer. [2Fe-2S] cluster serves as cofactor. Mg(2+) is required as a cofactor.

It catalyses the reaction (2R)-2,3-dihydroxy-3-methylbutanoate = 3-methyl-2-oxobutanoate + H2O. The enzyme catalyses (2R,3R)-2,3-dihydroxy-3-methylpentanoate = (S)-3-methyl-2-oxopentanoate + H2O. It functions in the pathway amino-acid biosynthesis; L-isoleucine biosynthesis; L-isoleucine from 2-oxobutanoate: step 3/4. Its pathway is amino-acid biosynthesis; L-valine biosynthesis; L-valine from pyruvate: step 3/4. Functions in the biosynthesis of branched-chain amino acids. Catalyzes the dehydration of (2R,3R)-2,3-dihydroxy-3-methylpentanoate (2,3-dihydroxy-3-methylvalerate) into 2-oxo-3-methylpentanoate (2-oxo-3-methylvalerate) and of (2R)-2,3-dihydroxy-3-methylbutanoate (2,3-dihydroxyisovalerate) into 2-oxo-3-methylbutanoate (2-oxoisovalerate), the penultimate precursor to L-isoleucine and L-valine, respectively. This is Dihydroxy-acid dehydratase from Desulfitobacterium hafniense (strain DSM 10664 / DCB-2).